Reading from the N-terminus, the 425-residue chain is UPF0597 protein UNCMA_16400 (425 aa).

It belongs to the UPF0597 family.

This is UPF0597 protein UNCMA_16400 from Methanocella arvoryzae (strain DSM 22066 / NBRC 105507 / MRE50).